Consider the following 596-residue polypeptide: Phosphoenolpyruvate carboxykinase [GTP] (596 aa).

Substrate-binding positions include arginine 77 and tyrosine 205–glycine 207. The Mn(2+) site is built by lysine 214 and histidine 234. Residue serine 256 participates in substrate binding. Residue alanine 257–asparagine 262 participates in GTP binding. Cysteine 258 is an active-site residue. Aspartate 283 provides a ligand contact to Mn(2+). The interval lysine 362–proline 388 is disordered. A substrate-binding site is contributed by asparagine 373–arginine 375. GTP-binding positions include arginine 375, arginine 406, and tyrosine 499–asparagine 502.

This sequence belongs to the phosphoenolpyruvate carboxykinase [GTP] family. As to quaternary structure, monomer. Mn(2+) is required as a cofactor.

The protein localises to the cytoplasm. The enzyme catalyses oxaloacetate + GTP = phosphoenolpyruvate + GDP + CO2. It participates in carbohydrate biosynthesis; gluconeogenesis. Functionally, catalyzes the conversion of oxaloacetate (OAA) to phosphoenolpyruvate (PEP), the rate-limiting step in the metabolic pathway that produces glucose from lactate and other precursors derived from the citric acid cycle. This chain is Phosphoenolpyruvate carboxykinase [GTP], found in Anaeromyxobacter dehalogenans (strain 2CP-1 / ATCC BAA-258).